A 279-amino-acid polypeptide reads, in one-letter code: Indole-3-glycerol phosphate synthase (279 aa).

This sequence belongs to the TrpC family.

The enzyme catalyses 1-(2-carboxyphenylamino)-1-deoxy-D-ribulose 5-phosphate + H(+) = (1S,2R)-1-C-(indol-3-yl)glycerol 3-phosphate + CO2 + H2O. The protein operates within amino-acid biosynthesis; L-tryptophan biosynthesis; L-tryptophan from chorismate: step 4/5. This Ectopseudomonas mendocina (strain ymp) (Pseudomonas mendocina) protein is Indole-3-glycerol phosphate synthase.